The primary structure comprises 509 residues: Maturase K (509 aa).

It belongs to the intron maturase 2 family. MatK subfamily.

The protein resides in the plastid. The protein localises to the chloroplast. Its function is as follows. Usually encoded in the trnK tRNA gene intron. Probably assists in splicing its own and other chloroplast group II introns. This is Maturase K from Nymphaea odorata (White water lily).